We begin with the raw amino-acid sequence, 246 residues long: Serine protease 1 (246 aa).

An N-terminal signal peptide occupies residues 1–15 (MSALLILALVGAAVA). The propeptide at 16–23 (FPLEDDDK) is activation peptide. The 221-residue stretch at 24 to 244 (IVGGYTCPEH…FVGWIQDTIA (221 aa)) folds into the Peptidase S1 domain. Disulfide bonds link Cys30/Cys160, Cys48/Cys64, Cys132/Cys233, Cys139/Cys206, Cys171/Cys185, and Cys196/Cys220. The active-site Charge relay system is His63. Glu75, Asn77, Val80, and Glu85 together coordinate Ca(2+). The Charge relay system role is filled by Asp107. The Charge relay system role is filled by Ser200.

It belongs to the peptidase S1 family. In terms of assembly, interacts with SERPINA1. Ca(2+) is required as a cofactor.

Its subcellular location is the secreted. It is found in the extracellular space. The enzyme catalyses Preferential cleavage: Arg-|-Xaa, Lys-|-Xaa.. This Rattus norvegicus (Rat) protein is Serine protease 1.